Here is a 776-residue protein sequence, read N- to C-terminus: Peregrinol diphosphate synthase CPS1, chloroplastic (776 aa).

A chloroplast-targeting transit peptide spans 1-17 (MASTPTLNLSITTPFVR). Lys238 contributes to the substrate binding site. The Mg(2+) site is built by Asp371 and Asp373. A DXDD motif motif is present at residues 371-374 (DIDD). A substrate-binding site is contributed by Lys457.

This sequence belongs to the terpene synthase family. It depends on Mg(2+) as a cofactor. In terms of tissue distribution, present in both leaves and flowers, with higher levels in leaves.

The protein resides in the plastid. The protein localises to the chloroplast. The catalysed reaction is peregrinol diphosphate = (2E,6E,10E)-geranylgeranyl diphosphate + H2O. Its pathway is secondary metabolite biosynthesis; terpenoid biosynthesis. In terms of biological role, involved in the biosynthesis of labdane-type diterpenoid including marrubiin and other labdane-related furanoid diterpenoids with potential applications as anti-diabetics, analgesics or vasorelaxants. Terpene synthase that produces peregrinol diphosphate from geranylgeranyl diphosphate (GGPP). This Marrubium vulgare (White horehound) protein is Peregrinol diphosphate synthase CPS1, chloroplastic.